Consider the following 512-residue polypeptide: GMP synthase [glutamine-hydrolyzing] (512 aa).

The 191-residue stretch at 7 to 197 (TIIVLDFGSQ…VFGVCGCSEG (191 aa)) folds into the Glutamine amidotransferase type-1 domain. Cys-84 serves as the catalytic Nucleophile. Residues His-171 and Glu-173 contribute to the active site. Residues 198–387 (WNMENFIEVE…LGIPDEIVWR (190 aa)) form the GMPS ATP-PPase domain. 225–231 (SGGVDSS) lines the ATP pocket.

Homodimer.

It catalyses the reaction XMP + L-glutamine + ATP + H2O = GMP + L-glutamate + AMP + diphosphate + 2 H(+). It participates in purine metabolism; GMP biosynthesis; GMP from XMP (L-Gln route): step 1/1. Catalyzes the synthesis of GMP from XMP. The chain is GMP synthase [glutamine-hydrolyzing] from Bacillus cereus (strain B4264).